The following is a 583-amino-acid chain: Cysteine/serine-rich nuclear protein 1 (583 aa).

Disordered regions lie at residues 1-79 (MTGL…APRE) and 306-381 (AESL…RSGV). The segment covering 18 to 41 (SSSSSSSFSSRLSLSSFPASSASP) has biased composition (low complexity). The segment covering 54–69 (APQSDQDSCGLQSFTP) has biased composition (polar residues). Residues 335–361 (PVSSELGDSSCSSDMTDSSTTLSSGSS) show a composition bias toward low complexity. Pro residues predominate over residues 364–373 (PNHPAHPSLP).

Belongs to the AXUD1 family. Widely expressed with highest levels in thymus and lung. Low levels detected in naive T-cells.

The protein resides in the nucleus. Binds to the consensus sequence 5'-AGAGTG-3' and has transcriptional activator activity. May have a tumor-suppressor function. May play a role in apoptosis. The protein is Cysteine/serine-rich nuclear protein 1 (Csrnp1) of Mus musculus (Mouse).